Consider the following 123-residue polypeptide: Integration host factor subunit alpha (123 aa).

Residues 97–123 form a disordered region; that stretch reads NANGSAPSMSSSASAVDDDKSESASRT. The segment covering 98–111 has biased composition (low complexity); sequence ANGSAPSMSSSASA. Positions 113–123 are enriched in basic and acidic residues; sequence DDDKSESASRT.

It belongs to the bacterial histone-like protein family. Heterodimer of an alpha and a beta chain.

This protein is one of the two subunits of integration host factor, a specific DNA-binding protein that functions in genetic recombination as well as in transcriptional and translational control. This Rhodopseudomonas palustris (strain BisB5) protein is Integration host factor subunit alpha.